A 362-amino-acid polypeptide reads, in one-letter code: Protein indeterminate-domain 16 (362 aa).

The disordered stretch occupies residues 1-22 (MELTQPIRENGDPQGHQLTDPD). 2 consecutive C2H2-type zinc fingers follow at residues 39-61 (YVCEICNQGFQRDQNLQMHRRRH) and 82-112 (YVCPEPTCLHHDPCHALGDLVGIKKHFRRKH). The CCHC-type 1; atypical zinc-finger motif lies at 118-142 (WVCERCSKGYAVQSDYKAHLKTCGS). 8 residues coordinate Zn(2+): Cys120, Cys123, His136, Cys140, Cys147, Cys149, His162, and Cys166. The CCHC-type 2; atypical zinc-finger motif lies at 145 to 168 (HSCDCGRVFSRVESFIEHQDTCTI). Residues 155-167 (RVESFIEHQDTCT) are SHR-binding. The interval 247 to 278 (SAQARHNEKRETSLTKERANEEARKAEETRQE) is disordered. The span at 251-278 (RHNEKRETSLTKERANEEARKAEETRQE) shows a compositional bias: basic and acidic residues. Residues 252–319 (HNEKRETSLT…VREEAIKRIN (68 aa)) adopt a coiled-coil conformation.

As to expression, highly expressed in leaves, hypocotyls, roots, vasculature of cotyledons, floral organs and in the endodermis and vasculaturenof inflorescence stems.

It localises to the nucleus. Functionally, transcription factor regulating lateral organ morphogenesis and gravitropic responses. Has a redundant role with IDD14 in directing leaf and floral organ morphogenesis. Acts cooperatively with IDD15 to control silique and branche orientation. Involved in the establishment of auxin gradients through the regulation of auxin biosynthesis and transport. The chain is Protein indeterminate-domain 16 from Arabidopsis thaliana (Mouse-ear cress).